A 338-amino-acid chain; its full sequence is Phenylalanine--tRNA ligase alpha subunit (338 aa).

Mg(2+) is bound at residue glutamate 252.

Belongs to the class-II aminoacyl-tRNA synthetase family. Phe-tRNA synthetase alpha subunit type 1 subfamily. Tetramer of two alpha and two beta subunits. Mg(2+) is required as a cofactor.

The protein resides in the cytoplasm. It carries out the reaction tRNA(Phe) + L-phenylalanine + ATP = L-phenylalanyl-tRNA(Phe) + AMP + diphosphate + H(+). The protein is Phenylalanine--tRNA ligase alpha subunit of Pseudomonas syringae pv. tomato (strain ATCC BAA-871 / DC3000).